The primary structure comprises 45 residues: DNA-directed RNA polymerase subunit Rpo12 (45 aa).

Positions 8, 23, and 26 each coordinate Zn(2+).

This sequence belongs to the archaeal Rpo12/eukaryotic RPC10 RNA polymerase subunit family. As to quaternary structure, part of the RNA polymerase complex. Zn(2+) serves as cofactor.

The protein resides in the cytoplasm. The enzyme catalyses RNA(n) + a ribonucleoside 5'-triphosphate = RNA(n+1) + diphosphate. DNA-dependent RNA polymerase (RNAP) catalyzes the transcription of DNA into RNA using the four ribonucleoside triphosphates as substrates. This is DNA-directed RNA polymerase subunit Rpo12 from Methanothrix thermoacetophila (strain DSM 6194 / JCM 14653 / NBRC 101360 / PT) (Methanosaeta thermophila).